We begin with the raw amino-acid sequence, 116 residues long: Nitrogen regulatory PII-like protein (116 aa).

It belongs to the P(II) protein family. Needs to interact with NrgA in order to localize correctly to the membrane.

The protein localises to the cell membrane. Functionally, required for full induction of the nrgAB operon under conditions of ammonium limitation. This chain is Nitrogen regulatory PII-like protein (nrgB), found in Bacillus subtilis (strain 168).